A 239-amino-acid polypeptide reads, in one-letter code: Increased recombination centers protein 22-2 (239 aa).

The N-terminal stretch at M1 to G19 is a signal peptide. Topologically, residues Y20–L161 are lumenal. Residues I162–I182 form a helical membrane-spanning segment. Residues W183–N239 lie on the Cytoplasmic side of the membrane. A compositionally biased stretch (low complexity) spans A201 to S213. The tract at residues A201–T222 is disordered.

The protein belongs to the IRC22 family.

The protein localises to the endoplasmic reticulum membrane. Functionally, is probably involved in a pathway contributing to genomic integrity. This chain is Increased recombination centers protein 22-2 (IRC22-2), found in Candida albicans (strain WO-1) (Yeast).